The primary structure comprises 129 residues: Small ribosomal subunit protein uS8 (129 aa).

The protein belongs to the universal ribosomal protein uS8 family. Part of the 30S ribosomal subunit. Contacts proteins S5 and S12.

Functionally, one of the primary rRNA binding proteins, it binds directly to 16S rRNA central domain where it helps coordinate assembly of the platform of the 30S subunit. The protein is Small ribosomal subunit protein uS8 of Mycoplasma capricolum subsp. capricolum (strain California kid / ATCC 27343 / NCTC 10154).